We begin with the raw amino-acid sequence, 91 residues long: MTGQPKTRVSVRIYGQDYTIVGAESPAHIRLVAAFVDDKMHEFSEKNPMLDVPKLAVLTAVNIASEYLKLKEEYNRLREQLKKEKDGERDD.

The stretch at 58 to 91 (LTAVNIASEYLKLKEEYNRLREQLKKEKDGERDD) forms a coiled coil.

Belongs to the ZapA family. Type 2 subfamily. As to quaternary structure, homodimer. Interacts with FtsZ.

It is found in the cytoplasm. Functionally, activator of cell division through the inhibition of FtsZ GTPase activity, therefore promoting FtsZ assembly into bundles of protofilaments necessary for the formation of the division Z ring. It is recruited early at mid-cell but it is not essential for cell division. This chain is Cell division protein ZapA, found in Geobacillus kaustophilus (strain HTA426).